The sequence spans 967 residues: Haze protective factor 1 (967 aa).

The first 23 residues, 1 to 23, serve as a signal peptide directing secretion; sequence MFNRFNKLQAALALVLYSQSALG. 2 N-linked (GlcNAc...) asparagine glycosylation sites follow: N28 and N35. The interval 72-301 is disordered; it reads SSSTEVSSSI…STSSASTASG (230 aa). 9 consecutive repeat copies span residues 93-105, 106-118, 119-131, 132-144, 153-165, 166-178, 179-191, 192-204, and 205-217. A 13 X approximate repeats, Ser-rich region spans residues 93–278; it reads SITSSGSSVS…QSGSSVSGSS (186 aa). The stretch at 218–230 is one 1-10; approximate repeat; the sequence is SATESGSASSVPS. The stretch at 234-247 is one 1-11; approximate repeat; that stretch reads SVTESGSSSSASES. Residues 248-259 form a 1-12; approximate repeat; the sequence is SITQSGTASGSS. The 1-13 repeat unit spans residues 266–278; sequence SVTQSGSSVSGSS. 3 N-linked (GlcNAc...) asparagine glycosylation sites follow: N493, N601, and N638. 4 tandem repeats follow at residues 745-780, 781-815, 816-854, and 855-893. A 4.5 X approximate tandem repeats, Thr-rich region spans residues 745–902; sequence SSKSYTTVTV…ASPKSYTTVT (158 aa). The segment at 836 to 857 is disordered; sequence KTVTSEAPKETSETSETSAAPK. The 2-5; truncated repeat unit spans residues 894–902; sequence SPKSYTTVT. A946 carries GPI-anchor amidated alanine lipidation. Positions 947–967 are cleaved as a propeptide — removed in mature form; the sequence is AGLNANTLNALVGIFVLAFFN.

This sequence belongs to the SRP1/TIP1 family. In terms of processing, the GPI-anchor is attached to the protein in the endoplasmic reticulum and serves to target the protein to the cell surface. There, the glucosamine-inositol phospholipid moiety is cleaved off and the GPI-modified mannoprotein is covalently attached via its lipidless GPI glycan remnant to the 1,6-beta-glucan of the outer cell wall layer.

It localises to the secreted. Its subcellular location is the cell wall. The protein localises to the membrane. In terms of biological role, involved in cell wall organization and biosynthesis. The protein is Haze protective factor 1 (HPF1) of Saccharomyces cerevisiae (strain ATCC 204508 / S288c) (Baker's yeast).